The following is a 208-amino-acid chain: Large ribosomal subunit protein uL4 (208 aa).

Residues 44–79 (QRQGTHKSKERSEISGSTRKLGRQKGGGGARRGDIN) are disordered.

It belongs to the universal ribosomal protein uL4 family. As to quaternary structure, part of the 50S ribosomal subunit.

Functionally, one of the primary rRNA binding proteins, this protein initially binds near the 5'-end of the 23S rRNA. It is important during the early stages of 50S assembly. It makes multiple contacts with different domains of the 23S rRNA in the assembled 50S subunit and ribosome. Its function is as follows. Forms part of the polypeptide exit tunnel. In Phocaeicola vulgatus (strain ATCC 8482 / DSM 1447 / JCM 5826 / CCUG 4940 / NBRC 14291 / NCTC 11154) (Bacteroides vulgatus), this protein is Large ribosomal subunit protein uL4.